A 501-amino-acid chain; its full sequence is ATP synthase subunit alpha, chloroplastic (501 aa).

170–177 (GDRQTGKT) serves as a coordination point for ATP.

The protein belongs to the ATPase alpha/beta chains family. In terms of assembly, F-type ATPases have 2 components, CF(1) - the catalytic core - and CF(0) - the membrane proton channel. CF(1) has five subunits: alpha(3), beta(3), gamma(1), delta(1), epsilon(1). CF(0) has four main subunits: a, b, b' and c.

It is found in the plastid. The protein localises to the chloroplast thylakoid membrane. The enzyme catalyses ATP + H2O + 4 H(+)(in) = ADP + phosphate + 5 H(+)(out). Produces ATP from ADP in the presence of a proton gradient across the membrane. The alpha chain is a regulatory subunit. This is ATP synthase subunit alpha, chloroplastic from Pisum sativum (Garden pea).